The sequence spans 155 residues: MATKSTSKPLLLSFLMMSYLISTFHVITVAEGRTLQFTKMATDHSGAGNLMDCWNAGLELKSCTDEIVKFFLSQTGTSEPPVKGGIDKDCCGAIGLVVKDCWSVMFTSLGLTTMEGNNLREYCEFQAEKSELSPSPAPETLALSPVEITYPGLDY.

Positions 1–32 are cleaved as a signal peptide; sequence MATKSTSKPLLLSFLMMSYLISTFHVITVAEG.

This sequence belongs to the plant egg cell-secreted peptide family. Restricted to female reproductive tissues, specifically accumulating in storage vesicles of the unfertilized egg cell.

It is found in the cytoplasmic vesicle. Its subcellular location is the secreted. In terms of biological role, involved in the regulation of gamete interactions during the double fertilization and to prevent multiple-pollen tube attraction; mediates the redistribution of the gamete fusogen HAP2/GCS1 to the cell surface after secretion upon sperm arrival. The chain is Egg cell-secreted protein 1.5 (EC1.5) from Arabidopsis thaliana (Mouse-ear cress).